A 391-amino-acid chain; its full sequence is Galactarate dehydratase (D-threo-forming) (391 aa).

Arginine 15 is a binding site for substrate. Aspartate 42 and histidine 45 together coordinate Mg(2+). Tyrosine 89 is a substrate binding site. Tyrosine 90 acts as the Proton donor in catalysis. Tyrosine 164 (proton acceptor) is an active-site residue. Aspartate 193, glutamate 221, and histidine 246 together coordinate Mg(2+). Position 296 (threonine 296) interacts with substrate. A Mg(2+)-binding site is contributed by threonine 297. Arginine 385 contacts substrate.

It belongs to the mandelate racemase/muconate lactonizing enzyme family. It depends on Mg(2+) as a cofactor.

The catalysed reaction is galactarate = (2S,3R)-dihydroxy-5-oxohexanedioate + H2O. Functionally, catalyzes the regioselective dehydration of galactarate into 2-keto-D-threo-4,5-dihydroxyadipate ((2S,3R)-dihydroxy-5-oxohexanedioate). Is not active on other acid sugars. This Oceanobacillus iheyensis (strain DSM 14371 / CIP 107618 / JCM 11309 / KCTC 3954 / HTE831) protein is Galactarate dehydratase (D-threo-forming).